The sequence spans 327 residues: Cytochrome c oxidase subunit 2 (327 aa).

Residues 1 to 23 (MEQIPASIWTLTAGVVVTLISFW) form the signal peptide. Transmembrane regions (helical) follow at residues 56–78 (LFLVVQGAIILFVIRYRRRAGEE) and 96–114 (AIPALIVIFLGIYSVDIFQ). The Cu cation site is built by histidine 221, cysteine 255, cysteine 259, and histidine 263.

This sequence belongs to the cytochrome c oxidase subunit 2 family. Requires Cu cation as cofactor.

It is found in the cell membrane. The catalysed reaction is 4 Fe(II)-[cytochrome c] + O2 + 8 H(+)(in) = 4 Fe(III)-[cytochrome c] + 2 H2O + 4 H(+)(out). Functionally, subunits I and II form the functional core of the enzyme complex. Electrons originating in cytochrome c are transferred via heme a and Cu(A) to the binuclear center formed by heme a3 and Cu(B). This is Cytochrome c oxidase subunit 2 (ctaC) from Thermostichus vulcanus (Synechococcus vulcanus).